Reading from the N-terminus, the 286-residue chain is MNRFSVLMCLVILSIFHGVPTAEGDVTVKFSLLGSNHKSYSKFITSMRNALPNAGDIYNIPLLVPSISGSRRYILMQLSNYEGNTITMAVDVTNVYIMGYLVNGTSYFFNETDAQLASKFVFQGTKSITLPYSGNYQKLQSVARKERDSIPLGFMALDSAISTLYYYDSRSAPIAFLVLIQTTAEAARYKYIEKQIIDRISVSKVPDLAAISLENEWSLLSKQIQIAKSNNGQFQTPVKIINDKGILTEVTNVSSLVVTKNIMLLLNKLNIASFEDHVISTTMPQA.

Positions 1 to 21 (MNRFSVLMCLVILSIFHGVPT) are cleaved as a signal peptide. 2 N-linked (GlcNAc...) asparagine glycosylation sites follow: Asn-103 and Asn-110. Glu-185 is an active-site residue. Asn-252 carries N-linked (GlcNAc...) asparagine glycosylation.

This sequence belongs to the ribosome-inactivating protein family. Type 1 RIP subfamily.

The catalysed reaction is Endohydrolysis of the N-glycosidic bond at one specific adenosine on the 28S rRNA.. This chain is Putative ribosome-inactivating protein, found in Cucumis ficifolius (Cucumis figarei).